The chain runs to 240 residues: Sorting nexin-3 (240 aa).

Positions 1-85 are disordered; sequence MSAYPQDTYF…PPVQVTHSPF (85 aa). Over residues 22 to 33 the composition is skewed to pro residues; the sequence is YQPPPQPQPQQP. Low complexity-rich tracts occupy residues 34–54 and 62–84; these read PYQQ…QPYQ and QQSP…THSP. In terms of domain architecture, PX spans 118-235; it reads SFLEIEIRNP…CAFLQDPAWD (118 aa). A 1,2-diacyl-sn-glycero-3-phospho-(1D-myo-inositol-3-phosphate) is bound by residues arginine 161, serine 163, lysine 187, arginine 192, and arginine 201.

It belongs to the sorting nexin family.

The protein localises to the cytoplasm. Its subcellular location is the golgi apparatus membrane. The protein resides in the prevacuolar compartment membrane. Required for retention of late Golgi membrane proteins. Component of the retrieval machinery that functions by direct interaction with the cytosolic tails of certain TGN membrane proteins during the sorting/budding process at the prevacuolar compartment. Binds phosphatidylinositol 3-phosphate (PtdIns(P3)). The polypeptide is Sorting nexin-3 (SNX3) (Cryptococcus neoformans var. neoformans serotype D (strain JEC21 / ATCC MYA-565) (Filobasidiella neoformans)).